We begin with the raw amino-acid sequence, 559 residues long: Kelch repeat and BTB domain-containing protein 2 (559 aa).

A BTB domain is found at 26-95 (CDVIITIGDG…LYNRHISSMN (70 aa)). In terms of domain architecture, BACK spans 128–223 (CIYIYHRLYE…CIDIQNLDKK (96 aa)). Kelch repeat units lie at residues 305–352 (EIII…VIDD), 353–399 (MIYA…VFDQ), and 401–463 (IYII…SHKD).

As to quaternary structure, interacts (via BTB domain) with host CUL3.

Its subcellular location is the host cytoplasm. Functionally, probable substrate-specific adapter of CUL3-containing E3 ubiquitin-protein ligases which mediate the ubiquitination and subsequent proteasomal degradation of host target proteins. The polypeptide is Kelch repeat and BTB domain-containing protein 2 (KBTB2) (Mus musculus (Mouse)).